We begin with the raw amino-acid sequence, 122 residues long: Protein preY, mitochondrial (122 aa).

The N-terminal 40 residues, 1-40, are a transit peptide targeting the mitochondrion; that stretch reads MLAVRAWGRTYNTLVQRKLNAACPTGALPAVTLRPLHCSL. Residues 56–102 form the TRM112 domain; sequence DPTLLQFLVCPLSRKSLRYEESTNELINDELGIAYPIVDGIPNMIPQ.

Belongs to the PREY family.

The protein resides in the mitochondrion. Its function is as follows. In mitochondria, S-adenosylmethionine-dependent methyltransferase chaperone that supports both coenzyme Q biosynthesis and NADH:ubiquinone oxidoreductase complex (complex I, MT-ND1) assembly. The sequence is that of Protein preY, mitochondrial (pyurf) from Xenopus tropicalis (Western clawed frog).